The sequence spans 151 residues: Probable cGMP 3',5'-cyclic phosphodiesterase subunit delta (151 aa).

This sequence belongs to the PDE6D/unc-119 family. As to quaternary structure, interacts with Pde6.

Its subcellular location is the nucleus. It is found in the cytoplasm. This is Probable cGMP 3',5'-cyclic phosphodiesterase subunit delta from Drosophila mojavensis (Fruit fly).